Consider the following 511-residue polypeptide: Probable cytosol aminopeptidase (511 aa).

K255 and D260 together coordinate Mn(2+). Residue K267 is part of the active site. Mn(2+) contacts are provided by D278, D337, and E339. R341 is an active-site residue. Positions 485 to 511 (GAAQAVSPKKAARKEPGAAARKARSAQ) are disordered.

It belongs to the peptidase M17 family. Requires Mn(2+) as cofactor.

The protein localises to the cytoplasm. It catalyses the reaction Release of an N-terminal amino acid, Xaa-|-Yaa-, in which Xaa is preferably Leu, but may be other amino acids including Pro although not Arg or Lys, and Yaa may be Pro. Amino acid amides and methyl esters are also readily hydrolyzed, but rates on arylamides are exceedingly low.. The catalysed reaction is Release of an N-terminal amino acid, preferentially leucine, but not glutamic or aspartic acids.. In terms of biological role, presumably involved in the processing and regular turnover of intracellular proteins. Catalyzes the removal of unsubstituted N-terminal amino acids from various peptides. This Variovorax paradoxus (strain S110) protein is Probable cytosol aminopeptidase.